The chain runs to 395 residues: Phosphoglycerate kinase (395 aa).

Residues 21–23 (DLN), arginine 36, 59–62 (HLGR), arginine 113, and arginine 146 contribute to the substrate site. Residues lysine 197, glutamate 324, and 350-353 (GGDT) contribute to the ATP site.

Belongs to the phosphoglycerate kinase family. In terms of assembly, monomer.

The protein resides in the cytoplasm. The enzyme catalyses (2R)-3-phosphoglycerate + ATP = (2R)-3-phospho-glyceroyl phosphate + ADP. It participates in carbohydrate degradation; glycolysis; pyruvate from D-glyceraldehyde 3-phosphate: step 2/5. This Acinetobacter baumannii (strain ACICU) protein is Phosphoglycerate kinase.